A 652-amino-acid chain; its full sequence is Acetyl-coenzyme A synthetase (652 aa).

CoA-binding positions include 189–192 and threonine 311; that span reads RGDK. ATP-binding positions include 387 to 389, 411 to 416, aspartate 500, and arginine 515; these read GEP and DTWWQT. Position 523 (serine 523) interacts with CoA. Arginine 526 is an ATP binding site. Positions 539 and 542 each coordinate Mg(2+). Arginine 584 is a CoA binding site. An N6-acetyllysine modification is found at lysine 609.

It belongs to the ATP-dependent AMP-binding enzyme family. Mg(2+) serves as cofactor. Acetylated. Deacetylation by the SIR2-homolog deacetylase activates the enzyme.

It catalyses the reaction acetate + ATP + CoA = acetyl-CoA + AMP + diphosphate. Its function is as follows. Catalyzes the conversion of acetate into acetyl-CoA (AcCoA), an essential intermediate at the junction of anabolic and catabolic pathways. AcsA undergoes a two-step reaction. In the first half reaction, AcsA combines acetate with ATP to form acetyl-adenylate (AcAMP) intermediate. In the second half reaction, it can then transfer the acetyl group from AcAMP to the sulfhydryl group of CoA, forming the product AcCoA. The protein is Acetyl-coenzyme A synthetase of Bartonella bacilliformis (strain ATCC 35685 / KC583 / Herrer 020/F12,63).